Reading from the N-terminus, the 149-residue chain is Calmodulin (149 aa).

The residue at position 2 (A2) is an N-acetylalanine. 4 consecutive EF-hand domains span residues 8–43, 44–79, 81–116, and 117–149; these read EQIAEFKEAGSLFDKDGDGTITTKELGTVMRSVGQN, PTEAELQDMINEVDADGNGTIDFPEFLTMMARKMKD, DSEEEILEAFQGFDKDGNGFISAAELRHMMTNLGEK, and LTDEEVDEMIREADIDGDGQINYEEFVKMMMSK. Positions 21, 23, 25, 27, 32, 57, 59, 61, 63, 68, 94, 96, 98, 105, 130, 132, 134, 136, and 141 each coordinate Ca(2+).

Belongs to the calmodulin family.

Functionally, calmodulin mediates the control of a large number of enzymes, ion channels and other proteins by Ca(2+). Among the enzymes to be stimulated by the calmodulin-Ca(2+) complex are a number of protein kinases and phosphatases. The chain is Calmodulin (CMD1) from Achlya klebsiana.